The sequence spans 194 residues: Crossover junction endodeoxyribonuclease RuvC (194 aa).

Residues D8, E72, and D144 contribute to the active site. Mg(2+) is bound by residues D8, E72, and D144.

Belongs to the RuvC family. As to quaternary structure, homodimer which binds Holliday junction (HJ) DNA. The HJ becomes 2-fold symmetrical on binding to RuvC with unstacked arms; it has a different conformation from HJ DNA in complex with RuvA. In the full resolvosome a probable DNA-RuvA(4)-RuvB(12)-RuvC(2) complex forms which resolves the HJ. Mg(2+) is required as a cofactor.

The protein localises to the cytoplasm. It catalyses the reaction Endonucleolytic cleavage at a junction such as a reciprocal single-stranded crossover between two homologous DNA duplexes (Holliday junction).. The RuvA-RuvB-RuvC complex processes Holliday junction (HJ) DNA during genetic recombination and DNA repair. Endonuclease that resolves HJ intermediates. Cleaves cruciform DNA by making single-stranded nicks across the HJ at symmetrical positions within the homologous arms, yielding a 5'-phosphate and a 3'-hydroxyl group; requires a central core of homology in the junction. The consensus cleavage sequence is 5'-(A/T)TT(C/G)-3'. Cleavage occurs on the 3'-side of the TT dinucleotide at the point of strand exchange. HJ branch migration catalyzed by RuvA-RuvB allows RuvC to scan DNA until it finds its consensus sequence, where it cleaves and resolves the cruciform DNA. The protein is Crossover junction endodeoxyribonuclease RuvC of Psychrobacter sp. (strain PRwf-1).